Consider the following 398-residue polypeptide: Probable beta-1,3-galactosyltransferase 5 (398 aa).

Residues 11 to 31 (LTMTWVPLLCISCFFLGAIFT) traverse the membrane as a helical; Signal-anchor for type II membrane protein segment. Residues Asn-110, Asn-115, and Asn-206 are each glycosylated (N-linked (GlcNAc...) asparagine).

The protein belongs to the glycosyltransferase 31 family. Mn(2+) is required as a cofactor.

It is found in the golgi apparatus membrane. The protein operates within protein modification; protein glycosylation. Its function is as follows. Beta-1,3-galactosyltransferase that transfers galactose from UDP-galactose to substrates with a terminal glycosyl residue. This chain is Probable beta-1,3-galactosyltransferase 5 (B3GALT5), found in Arabidopsis thaliana (Mouse-ear cress).